A 151-amino-acid chain; its full sequence is UPF0208 membrane protein YE1335 (151 aa).

2 helical membrane passes run 46–66 and 69–89; these read FGIRFMPPLAIFTLTWQIALG and LGPAIATALFACGLPLQGLWW.

It belongs to the UPF0208 family.

The protein localises to the cell inner membrane. This Yersinia enterocolitica serotype O:8 / biotype 1B (strain NCTC 13174 / 8081) protein is UPF0208 membrane protein YE1335.